Reading from the N-terminus, the 427-residue chain is POU domain protein CF1A (427 aa).

Disordered regions lie at residues 39–77 (YMQH…GLGS), 196–217 (HHHM…TPTS), 288–309 (TTGS…KKRT), and 390–427 (HDMH…LAAH). Residues 49 to 66 (AAAAAAHHQLPSSPSPNG) show a composition bias toward low complexity. Over residues 67–77 (QGNGGGLGLGS) the composition is skewed to gly residues. The region spanning 212–286 (EDTPTSDDLE…LLQKWLEEAD (75 aa)) is the POU-specific domain. The homeobox DNA-binding region spans 304–363 (KRKKRTSIEVSVKGALEQHFHKQPKPSAQEITSLADSLQLEKEVVRVWFCNRRQKEKRMT).

Belongs to the POU transcription factor family. Class-3 subfamily. As to expression, coexpressed with acj6 in overlapping subsets of neurons in the embryonic epidermis and central nervous system. First detected in the precursor of the tracheal pits and the stomodeal invagination and later in the peripheral nervous system.

The protein resides in the nucleus. Binds to a DNA sequence element required for the expression of the dopa decarboxylase gene (Ddc) in specific dopaminergic neurons. Could also play an early role in specific ectodermal cells, and a subsequent role in the embryonic nervous system. In Drosophila melanogaster (Fruit fly), this protein is POU domain protein CF1A (vvl).